A 382-amino-acid polypeptide reads, in one-letter code: Lipid-A-disaccharide synthase (382 aa).

Belongs to the LpxB family.

The catalysed reaction is 2-N,3-O-bis[(3R)-3-hydroxytetradecanoyl]-alpha-D-glucosaminyl 1-phosphate + UDP-2-N,3-O-bis[(3R)-3-hydroxytetradecanoyl]-alpha-D-glucosamine = lipid A disaccharide (E. coli) + UDP + H(+). The enzyme catalyses a lipid X + a UDP-2-N,3-O-bis[(3R)-3-hydroxyacyl]-alpha-D-glucosamine = a lipid A disaccharide + UDP + H(+). The protein operates within glycolipid biosynthesis; lipid IV(A) biosynthesis; lipid IV(A) from (3R)-3-hydroxytetradecanoyl-[acyl-carrier-protein] and UDP-N-acetyl-alpha-D-glucosamine: step 5/6. Functionally, condensation of UDP-2,3-diacylglucosamine and 2,3-diacylglucosamine-1-phosphate to form lipid A disaccharide, a precursor of lipid A, a phosphorylated glycolipid that anchors the lipopolysaccharide to the outer membrane of the cell. The polypeptide is Lipid-A-disaccharide synthase (Escherichia coli O7:K1 (strain IAI39 / ExPEC)).